A 444-amino-acid polypeptide reads, in one-letter code: L-cysteine:1D-myo-inositol 2-amino-2-deoxy-alpha-D-glucopyranoside ligase (444 aa).

The segment covering 1-13 (MPCDRKTSPDQHH) has biased composition (basic and acidic residues). Residues 1–21 (MPCDRKTSPDQHHALQIHRHH) form a disordered region. Cys-75 is a Zn(2+) binding site. Residues 75-78 (CGIT), Thr-90, and 113-115 (NIT) contribute to the L-cysteinyl-5'-AMP site. The 'HIGH' region signature appears at 77–87 (ITPYDATHLGH). Positions 219–224 (ERGGDP) match the 'ERGGDP' region motif. Trp-259 contacts L-cysteinyl-5'-AMP. Position 263 (Cys-263) interacts with Zn(2+). 281–283 (GSD) serves as a coordination point for L-cysteinyl-5'-AMP. His-288 provides a ligand contact to Zn(2+). Ile-315 is an L-cysteinyl-5'-AMP binding site. Residues 321–325 (KMSKS) carry the 'KMSKS' region motif.

This sequence belongs to the class-I aminoacyl-tRNA synthetase family. MshC subfamily. In terms of assembly, monomer. Requires Zn(2+) as cofactor.

It carries out the reaction 1D-myo-inositol 2-amino-2-deoxy-alpha-D-glucopyranoside + L-cysteine + ATP = 1D-myo-inositol 2-(L-cysteinylamino)-2-deoxy-alpha-D-glucopyranoside + AMP + diphosphate + H(+). Catalyzes the ATP-dependent condensation of GlcN-Ins and L-cysteine to form L-Cys-GlcN-Ins. The polypeptide is L-cysteine:1D-myo-inositol 2-amino-2-deoxy-alpha-D-glucopyranoside ligase (Mycolicibacterium gilvum (strain PYR-GCK) (Mycobacterium gilvum (strain PYR-GCK))).